Consider the following 402-residue polypeptide: Formate-dependent phosphoribosylglycinamide formyltransferase (402 aa).

N(1)-(5-phospho-beta-D-ribosyl)glycinamide is bound by residues 22–23 and Glu82; that span reads EL. Residues Arg115, Lys160, 165 to 170, 200 to 203, and Glu208 contribute to the ATP site; these read SSGKGQ and EGFV. Residues 120–318 enclose the ATP-grasp domain; that stretch reads RLAAETLGLP…EFELHARAIL (199 aa). 2 residues coordinate Mg(2+): Glu277 and Glu289. N(1)-(5-phospho-beta-D-ribosyl)glycinamide contacts are provided by residues Asp296, Lys365, and 372–373; that span reads RR.

It belongs to the PurK/PurT family. In terms of assembly, homodimer.

It catalyses the reaction N(1)-(5-phospho-beta-D-ribosyl)glycinamide + formate + ATP = N(2)-formyl-N(1)-(5-phospho-beta-D-ribosyl)glycinamide + ADP + phosphate + H(+). Its pathway is purine metabolism; IMP biosynthesis via de novo pathway; N(2)-formyl-N(1)-(5-phospho-D-ribosyl)glycinamide from N(1)-(5-phospho-D-ribosyl)glycinamide (formate route): step 1/1. Functionally, involved in the de novo purine biosynthesis. Catalyzes the transfer of formate to 5-phospho-ribosyl-glycinamide (GAR), producing 5-phospho-ribosyl-N-formylglycinamide (FGAR). Formate is provided by PurU via hydrolysis of 10-formyl-tetrahydrofolate. This chain is Formate-dependent phosphoribosylglycinamide formyltransferase, found in Mycobacteroides abscessus (strain ATCC 19977 / DSM 44196 / CCUG 20993 / CIP 104536 / JCM 13569 / NCTC 13031 / TMC 1543 / L948) (Mycobacterium abscessus).